We begin with the raw amino-acid sequence, 967 residues long: Phosphoenolpyruvate carboxylase (967 aa).

A Phosphoserine modification is found at Ser10. Residues His171 and Lys601 contribute to the active site. The interval 915–936 (NASRLPLSRESPEATKPADELV) is disordered. Basic and acidic residues predominate over residues 924–933 (ESPEATKPAD).

The protein belongs to the PEPCase type 1 family. Homotetramer. The cofactor is Mg(2+).

It is found in the cytoplasm. It carries out the reaction oxaloacetate + phosphate = phosphoenolpyruvate + hydrogencarbonate. By light-reversible phosphorylation. Through the carboxylation of phosphoenolpyruvate (PEP) it forms oxaloacetate, a four-carbon dicarboxylic acid source for the tricarboxylic acid cycle. This Pisum sativum (Garden pea) protein is Phosphoenolpyruvate carboxylase.